Here is a 171-residue protein sequence, read N- to C-terminus: MERSHQHQQLRKEEHDTLSKLKQMPVESLNLEAISIATNLYRSAQRLRVKMETEVLSTYNLSWTAFSILYDLWVWGALETRKIAELSGISTATASNVIKTLEKKSFCRKSIDTRDRRLVFVSITDSGKQAIEELYPEFHKGETELIAGMTKDEQKILTGLLRKVADNLHTT.

The region spanning 33-166 is the HTH marR-type domain; the sequence is AISIATNLYR…LTGLLRKVAD (134 aa). The H-T-H motif DNA-binding region spans 80-103; the sequence is TRKIAELSGISTATASNVIKTLEK.

This is an uncharacterized protein from Bacillus subtilis (strain 168).